The chain runs to 391 residues: Polyisoprenyl-teichoic acid--peptidoglycan teichoic acid transferase TagV (391 aa).

Over 1–23 (MAERVRVRVRKKKKSKRRKILKR) the chain is Cytoplasmic. A helical; Signal-anchor for type II membrane protein transmembrane segment spans residues 24 to 44 (IMLLFALALLVVVGLGGYKLY). The Extracellular portion of the chain corresponds to 45-391 (KTINAADESY…TTNSTTDSSY (347 aa)). Positions 329-391 (DYTPDTSTGT…TTNSTTDSSY (63 aa)) are disordered. The segment covering 333-391 (DTSTGTSGTEDGTDSSSSSGSTGSTGTTTDGTTNGSSYSNDSSTSSNNSTTNSTTDSSY) has biased composition (low complexity).

This sequence belongs to the LytR/CpsA/Psr (LCP) family.

Its subcellular location is the cell membrane. Its pathway is cell wall biogenesis. Functionally, may catalyze the final step in cell wall teichoic acid biosynthesis, the transfer of the anionic cell wall polymers (APs) from their lipid-linked precursor to the cell wall peptidoglycan (PG). In Bacillus subtilis (strain 168), this protein is Polyisoprenyl-teichoic acid--peptidoglycan teichoic acid transferase TagV.